A 29-amino-acid chain; its full sequence is uncharacterized protein (29 aa).

A disordered region spans residues 1-29; sequence MFKMKFGDTLPRSDFGTGGNKQAPGLELG.

This is an uncharacterized protein from Saccharomyces cerevisiae (strain ATCC 204508 / S288c) (Baker's yeast).